Consider the following 189-residue polypeptide: Protein OXIDATIVE STRESS 3 LIKE 2 (189 aa).

Disordered regions lie at residues 22–49 (SSSTSSDSIGENSDDDEGGENEIESSYN) and 128–147 (AMSQREGDSSSSGDDSLPTL). Residues 33-44 (NSDDDEGGENEI) show a composition bias toward acidic residues.

The protein localises to the nucleus. This Arabidopsis thaliana (Mouse-ear cress) protein is Protein OXIDATIVE STRESS 3 LIKE 2.